The primary structure comprises 72 residues: Large ribosomal subunit protein bL31 (72 aa).

Zn(2+) is bound by residues Cys-17, Cys-19, Cys-37, and Cys-40.

This sequence belongs to the bacterial ribosomal protein bL31 family. Type A subfamily. As to quaternary structure, part of the 50S ribosomal subunit. It depends on Zn(2+) as a cofactor.

Its function is as follows. Binds the 23S rRNA. The chain is Large ribosomal subunit protein bL31 from Clostridium botulinum (strain ATCC 19397 / Type A).